The chain runs to 670 residues: DNA ligase (670 aa).

NAD(+)-binding positions include 32–36 (DSEYD), 81–82 (SL), and glutamate 114. The N6-AMP-lysine intermediate role is filled by lysine 116. NAD(+) is bound by residues arginine 137, glutamate 174, lysine 291, and lysine 315. The Zn(2+) site is built by cysteine 409, cysteine 412, cysteine 427, and cysteine 433. In terms of domain architecture, BRCT spans 592-670 (ASENLFKDKT…EEEFLAQITR (79 aa)).

This sequence belongs to the NAD-dependent DNA ligase family. LigA subfamily. Requires Mg(2+) as cofactor. Mn(2+) is required as a cofactor.

It catalyses the reaction NAD(+) + (deoxyribonucleotide)n-3'-hydroxyl + 5'-phospho-(deoxyribonucleotide)m = (deoxyribonucleotide)n+m + AMP + beta-nicotinamide D-nucleotide.. Functionally, DNA ligase that catalyzes the formation of phosphodiester linkages between 5'-phosphoryl and 3'-hydroxyl groups in double-stranded DNA using NAD as a coenzyme and as the energy source for the reaction. It is essential for DNA replication and repair of damaged DNA. This Haemophilus influenzae (strain PittEE) protein is DNA ligase.